Consider the following 35-residue polypeptide: MGIDLHLIANFAALALITLAGPAVIFILFYRRGAL.

The chain crosses the membrane as a helical span at residues 7-27 (LIANFAALALITLAGPAVIFI).

Belongs to the Psb30/Ycf12 family. As to quaternary structure, PSII is composed of 1 copy each of membrane proteins PsbA, PsbB, PsbC, PsbD, PsbE, PsbF, PsbH, PsbI, PsbJ, PsbK, PsbL, PsbM, PsbT, PsbX, PsbY, PsbZ, Psb30/Ycf12, peripheral proteins of the oxygen-evolving complex and a large number of cofactors. It forms dimeric complexes.

It is found in the plastid. The protein localises to the organellar chromatophore thylakoid membrane. Functionally, a core subunit of photosystem II (PSII), probably helps stabilize the reaction center. This is Photosystem II reaction center protein Psb30 from Paulinella chromatophora.